The primary structure comprises 241 residues: Small ribosomal subunit protein uS2 (241 aa).

It belongs to the universal ribosomal protein uS2 family.

This chain is Small ribosomal subunit protein uS2, found in Salmonella agona (strain SL483).